Here is a 226-residue protein sequence, read N- to C-terminus: uncharacterized protein (226 aa).

It belongs to the mimivirus L246/L426 family.

This is an uncharacterized protein from Acanthamoeba polyphaga mimivirus (APMV).